A 516-amino-acid chain; its full sequence is Amino-acid permease BAT1 (516 aa).

Transmembrane regions (helical) follow at residues 33-53 (LSVF…TGIT), 70-90 (YGWF…AEIC), 113-133 (PLAS…VTAS), 164-184 (VVIG…SLPI), 189-209 (FIGQ…MILI), 232-252 (LGIT…QYTI), 275-295 (GIIS…LGIS), 328-348 (FGSG…VFFC), 383-403 (VPIN…LTSL), 406-426 (IVAF…AYAI), 452-472 (VVGW…SLPV), and 483-503 (YTPV…LFSA).

It belongs to the amino acid-polyamine-organocation (APC) superfamily. Amino acid/choline transporter (ACT) (TC 2.A.3.4) family. Expressed in roots, rosette leaves, stems, cauline leaves, flowers and siliques.

The protein resides in the mitochondrion membrane. In terms of biological role, may play a role in primary carbon metabolism and plant growth, by mediating the transport of GABA from the cytosol to mitochondria. When expressed in a heterologous system (yeast), imports Arg and Ala across the plasma membrane and exports Lys and Glu, but does not transport proline. In Arabidopsis thaliana (Mouse-ear cress), this protein is Amino-acid permease BAT1 (BAT1).